A 224-amino-acid chain; its full sequence is Urease accessory protein UreF (224 aa).

The protein belongs to the UreF family. In terms of assembly, ureD, UreF and UreG form a complex that acts as a GTP-hydrolysis-dependent molecular chaperone, activating the urease apoprotein by helping to assemble the nickel containing metallocenter of UreC. The UreE protein probably delivers the nickel.

The protein localises to the cytoplasm. Required for maturation of urease via the functional incorporation of the urease nickel metallocenter. This is Urease accessory protein UreF from Nitrosococcus oceani (strain ATCC 19707 / BCRC 17464 / JCM 30415 / NCIMB 11848 / C-107).